The following is a 587-amino-acid chain: Sulfite reductase [NADPH] hemoprotein beta-component (587 aa).

Residues 1 to 13 (MQSTDNDLSQSPP) show a composition bias toward polar residues. Positions 1–20 (MQSTDNDLSQSPPKLSADEQ) are disordered. 4 residues coordinate [4Fe-4S] cluster: Cys439, Cys445, Cys484, and Cys488. A siroheme-binding site is contributed by Cys488.

It belongs to the nitrite and sulfite reductase 4Fe-4S domain family. Alpha(8)-beta(8). The alpha component is a flavoprotein, the beta component is a hemoprotein. Siroheme is required as a cofactor. [4Fe-4S] cluster serves as cofactor.

The catalysed reaction is hydrogen sulfide + 3 NADP(+) + 3 H2O = sulfite + 3 NADPH + 4 H(+). The protein operates within sulfur metabolism; hydrogen sulfide biosynthesis; hydrogen sulfide from sulfite (NADPH route): step 1/1. Component of the sulfite reductase complex that catalyzes the 6-electron reduction of sulfite to sulfide. This is one of several activities required for the biosynthesis of L-cysteine from sulfate. The sequence is that of Sulfite reductase [NADPH] hemoprotein beta-component from Bordetella petrii (strain ATCC BAA-461 / DSM 12804 / CCUG 43448).